A 493-amino-acid polypeptide reads, in one-letter code: uncharacterized protein (493 aa).

The segment at 316-403 (LNMVNFGPDD…NSVDNSVHDS (88 aa)) is disordered. Over residues 338-353 (ESQNNSESNSESITES) the composition is skewed to low complexity. Residues 371–398 (SQDNDTVQIDKSTSSDSVHNYFDNSVDN) show a composition bias toward polar residues.

This sequence belongs to the mimivirus R69 family.

This is an uncharacterized protein from Acanthamoeba polyphaga (Amoeba).